We begin with the raw amino-acid sequence, 152 residues long: Transcriptional regulator MraZ (152 aa).

2 SpoVT-AbrB domains span residues 5-52 and 81-124; these read ASAI…PIHE and AHEV…DEQS.

Belongs to the MraZ family. In terms of assembly, forms oligomers.

It is found in the cytoplasm. The protein resides in the nucleoid. This chain is Transcriptional regulator MraZ, found in Shewanella baltica (strain OS195).